The primary structure comprises 241 residues: Ubiquinone biosynthesis O-methyltransferase (241 aa).

4 residues coordinate S-adenosyl-L-methionine: Arg-44, Gly-63, Asp-84, and Met-128.

The protein belongs to the methyltransferase superfamily. UbiG/COQ3 family.

The enzyme catalyses a 3-demethylubiquinol + S-adenosyl-L-methionine = a ubiquinol + S-adenosyl-L-homocysteine + H(+). The catalysed reaction is a 3-(all-trans-polyprenyl)benzene-1,2-diol + S-adenosyl-L-methionine = a 2-methoxy-6-(all-trans-polyprenyl)phenol + S-adenosyl-L-homocysteine + H(+). It functions in the pathway cofactor biosynthesis; ubiquinone biosynthesis. In terms of biological role, O-methyltransferase that catalyzes the 2 O-methylation steps in the ubiquinone biosynthetic pathway. In Hydrogenovibrio crunogenus (strain DSM 25203 / XCL-2) (Thiomicrospira crunogena), this protein is Ubiquinone biosynthesis O-methyltransferase.